A 111-amino-acid chain; its full sequence is Putative membrane protein insertion efficiency factor (111 aa).

Belongs to the UPF0161 family.

Its subcellular location is the cell inner membrane. Functionally, could be involved in insertion of integral membrane proteins into the membrane. The protein is Putative membrane protein insertion efficiency factor of Methylobacterium nodulans (strain LMG 21967 / CNCM I-2342 / ORS 2060).